Reading from the N-terminus, the 570-residue chain is Sulfite reductase [NADPH] hemoprotein beta-component (570 aa).

[4Fe-4S] cluster contacts are provided by cysteine 434, cysteine 440, cysteine 479, and cysteine 483. Cysteine 483 provides a ligand contact to siroheme.

It belongs to the nitrite and sulfite reductase 4Fe-4S domain family. In terms of assembly, alpha(8)-beta(8). The alpha component is a flavoprotein, the beta component is a hemoprotein. The cofactor is siroheme. Requires [4Fe-4S] cluster as cofactor.

It carries out the reaction hydrogen sulfide + 3 NADP(+) + 3 H2O = sulfite + 3 NADPH + 4 H(+). It participates in sulfur metabolism; hydrogen sulfide biosynthesis; hydrogen sulfide from sulfite (NADPH route): step 1/1. Component of the sulfite reductase complex that catalyzes the 6-electron reduction of sulfite to sulfide. This is one of several activities required for the biosynthesis of L-cysteine from sulfate. This chain is Sulfite reductase [NADPH] hemoprotein beta-component, found in Escherichia coli O17:K52:H18 (strain UMN026 / ExPEC).